The following is a 122-amino-acid chain: Large ribosomal subunit protein uL14 (122 aa).

The protein belongs to the universal ribosomal protein uL14 family. Part of the 50S ribosomal subunit. Forms a cluster with proteins L3 and L19. In the 70S ribosome, L14 and L19 interact and together make contacts with the 16S rRNA in bridges B5 and B8.

In terms of biological role, binds to 23S rRNA. Forms part of two intersubunit bridges in the 70S ribosome. The chain is Large ribosomal subunit protein uL14 from Corynebacterium kroppenstedtii (strain DSM 44385 / JCM 11950 / CIP 105744 / CCUG 35717).